A 325-amino-acid polypeptide reads, in one-letter code: Casein kinase I isoform alpha (325 aa).

Ala2 carries the N-acetylalanine modification. A Phosphoserine modification is found at Ser4. At Lys8 the chain carries N6-acetyllysine. The 269-residue stretch at 17 to 285 folds into the Protein kinase domain; that stretch reads YKLVRKIGSG…YLRQLFRILF (269 aa). ATP is bound by residues 23-31 and Lys46; that span reads IGSGSFGDI. Asp136 (proton acceptor) is an active-site residue.

It belongs to the protein kinase superfamily. CK1 Ser/Thr protein kinase family. Casein kinase I subfamily. As to quaternary structure, interacts with the Axin complex. Interacts with TUT1, leading to TUT1 phosphorylation. Interacts with FAM83A, FAM83B, FAM83C, FAM83D, FAM83E, FAM83F, FAM83G and FAM83H (via DUF1669). Interaction with FAM83H recruits CSNK1A1 to keratin filaments. In terms of processing, phosphorylated by MTOR in response to mitogenic stimulation, leading to its activation.

It localises to the cytoplasm. It is found in the cytoskeleton. Its subcellular location is the microtubule organizing center. The protein resides in the centrosome. The protein localises to the chromosome. It localises to the centromere. It is found in the kinetochore. Its subcellular location is the nucleus speckle. The protein resides in the cilium basal body. The protein localises to the spindle. It carries out the reaction L-seryl-[protein] + ATP = O-phospho-L-seryl-[protein] + ADP + H(+). The catalysed reaction is L-threonyl-[protein] + ATP = O-phospho-L-threonyl-[protein] + ADP + H(+). In terms of biological role, casein kinases are operationally defined by their preferential utilization of acidic proteins such as caseins as substrates. Can phosphorylate a large number of proteins. Participates in Wnt signaling. Phosphorylates CTNNB1 at 'Ser-45'. May phosphorylate PER1 and PER2. May play a role in segregating chromosomes during mitosis. May play a role in keratin cytoskeleton disassembly and thereby, it may regulate epithelial cell migration. Acts as a positive regulator of mTORC1 and mTORC2 signaling in response to nutrients by mediating phosphorylation of DEPTOR inhibitor. Acts as an inhibitor of NLRP3 inflammasome assembly by mediating phosphorylation of NLRP3. The sequence is that of Casein kinase I isoform alpha (CSNK1A1) from Oryctolagus cuniculus (Rabbit).